The sequence spans 91 residues: DNA-binding protein HU (91 aa).

It belongs to the bacterial histone-like protein family.

Functionally, histone-like DNA-binding protein which is capable of wrapping DNA to stabilize it, and thus to prevent its denaturation under extreme environmental conditions. Also seems to act as a fortuitous virulence factor in delayed sequelae by binding to heparan sulfate-proteoglycans in the extracellular matrix of target organs and acting as a nidus for in situ immune complex formation. This Streptococcus mutans serotype c (strain ATCC 700610 / UA159) protein is DNA-binding protein HU (hup).